The following is a 597-amino-acid chain: Probable HECT-type ubiquitin ligase-interacting protein creD (597 aa).

Disordered regions lie at residues 375 to 398 and 432 to 499; these read ELDPNGYRTPGPGSGPGTPFGTLS and LNIT…MATP. The segment covering 443 to 455 has biased composition (basic and acidic residues); that stretch reads TDHESQNDSEHRR. Residues 465 to 481 show a composition bias toward low complexity; that stretch reads PSSGSNSHSPSSPVLSR. The span at 482-492 shows a compositional bias: basic and acidic residues; the sequence is RPSDEVDHEHV.

It belongs to the arrestin family. Interacts with hulA.

Its function is as follows. Component of the regulatory network controlling carbon source utilization through ubiquitination and deubiquitination involving creA, creB, creC, creD and acrB. May be involved in signaling by recognizing appropriately phosphorylated substrates via its arrestin domains and then recruit a HECT-type ubiquitin ligase such as hulA, leading to ubiquitination of the substrate, providing a link between ubiquitination and phosphorylation in protein regulation and stability. In Aspergillus oryzae (strain ATCC 42149 / RIB 40) (Yellow koji mold), this protein is Probable HECT-type ubiquitin ligase-interacting protein creD (creD).